The chain runs to 455 residues: Probable galactarate/D-glucarate transporter GudP (455 aa).

Helical transmembrane passes span 19 to 39, 59 to 79, 87 to 107, 108 to 128, 153 to 173, 177 to 197, 253 to 273, 289 to 309, 320 to 340, 348 to 368, 386 to 406, and 414 to 434; these read WFIV…RATL, YVFS…GWLL, IIAL…AIGF, FSAG…GLSE, AFFN…MGWL, FGWH…AVIW, IGVY…LTWF, GFVA…GGIV, LTFA…SMIV, WLVV…ALGW, LFNT…GYIV, and GALV…LLLV.

It belongs to the major facilitator superfamily. Phthalate permease family.

It localises to the cell membrane. It carries out the reaction galactarate(in) + H(+)(in) = galactarate(out) + H(+)(out). The enzyme catalyses D-glucarate(in) + H(+)(in) = D-glucarate(out) + H(+)(out). Functionally, probably involved in the uptake of galactarate and/or D-glucarate. The protein is Probable galactarate/D-glucarate transporter GudP of Bacillus subtilis (strain 168).